The following is a 460-amino-acid chain: Keratin, type I cytoskeletal 27 (460 aa).

A head region spans residues 1–83 (MSVRFSSASR…GNEHGLLSGN (83 aa)). Residues 84-119 (EKVTMQNLNDRLASYLDNVRALEEANADLEQKIKGW) are coil 1A. One can recognise an IF rod domain in the interval 84–399 (EKVTMQNLND…RLIDGEDGSC (316 aa)). A linker 1 region spans residues 120 to 141 (YEKFGPGSCRGLDHDYSRYFTV). Residues 142 to 233 (IDDLRNQIIS…KNHEEEMKAL (92 aa)) form a coil 1B region. The tract at residues 234-256 (QCAAGGNVNVEMNAAPGVDLTVL) is linker 12. A coil 2 region spans residues 257 to 395 (LNNMRAEYEA…ETYCRLIDGE (139 aa)). The tract at residues 396–460 (DGSCTKSKGY…NMKSEQRVPS (65 aa)) is tail. Residues 429 to 460 (DPRGKVPSSRVHTVEEKSTKVNNMKSEQRVPS) form a disordered region. The segment covering 448 to 460 (KVNNMKSEQRVPS) has biased composition (polar residues).

It belongs to the intermediate filament family. As to quaternary structure, heterotetramer of two type I and two type II keratins. Interacts with KRT6A to form filaments.

The protein resides in the cytoplasm. Essential for the proper assembly of type I and type II keratin protein complexes and formation of keratin intermediate filaments in the inner root sheath (irs). This is Keratin, type I cytoskeletal 27 from Capra hircus (Goat).